Here is a 243-residue protein sequence, read N- to C-terminus: Clathrin light chain A (243 aa).

M1 bears the Blocked amino end (Met) mark. Disordered regions lie at residues 1-22 (MAEL…GVAG) and 49-87 (ILDG…GPTD). A compositionally biased stretch (gly residues) spans 10–20 (PAGGPALGNGV). The segment at 95–157 (VDRLQSEPES…QLQKTKANNR (63 aa)) is involved in binding clathrin heavy chain. 2 positions are modified to phosphoserine: S100 and S201. At K218 the chain carries N6-acetyllysine. The residue at position 231 (S231) is a Phosphoserine. K237 is modified (N6-acetyllysine).

This sequence belongs to the clathrin light chain family. Clathrin coats are formed from molecules containing 3 heavy chains and 3 light chains. Interacts with CALY; the interaction stimulates clathrin self-assembly and clathrin-mediated endocytosis. Interacts with CKAP5 and TACC3 forming the TACC3/ch-TOG/clathrin complex located at spindle inter-microtubules bridges; the complex implicates clathrin triskelions.

The protein resides in the cytoplasmic vesicle membrane. The protein localises to the membrane. It localises to the coated pit. It is found in the cytoplasm. Its subcellular location is the cytoskeleton. The protein resides in the spindle. In terms of biological role, clathrin is the major protein of the polyhedral coat of coated pits and vesicles. Acts as a component of the TACC3/ch-TOG/clathrin complex proposed to contribute to stabilization of kinetochore fibers of the mitotic spindle by acting as inter-microtubule bridge. The sequence is that of Clathrin light chain A (CLTA) from Bos taurus (Bovine).